Here is a 211-residue protein sequence, read N- to C-terminus: Ribosomal RNA small subunit methyltransferase G (211 aa).

S-adenosyl-L-methionine is bound by residues glycine 73, phenylalanine 78, 124–125 (VE), and arginine 137.

Belongs to the methyltransferase superfamily. RNA methyltransferase RsmG family.

Its subcellular location is the cytoplasm. Its function is as follows. Specifically methylates the N7 position of a guanine in 16S rRNA. The chain is Ribosomal RNA small subunit methyltransferase G from Christiangramia forsetii (strain DSM 17595 / CGMCC 1.15422 / KT0803) (Gramella forsetii).